Consider the following 277-residue polypeptide: Uridine-cytidine kinase 1 (277 aa).

The tract at residues 1–30 (MASAGGGGSESAAPEADRPQPRPFLIGVSG) is disordered. 30–38 (GGTASGKST) contributes to the ATP binding site. The substrate site is built by Asp-87, Tyr-115, His-120, Arg-169, Arg-178, and Gln-186. Position 215 (Asp-215) interacts with ATP. The segment covering 238-250 (RHRGGPNGRNHKR) has biased composition (basic residues). Residues 238–277 (RHRGGPNGRNHKRTFPEPGDHPGVLATGKRSHLESSSRPH) are disordered. Thr-251 is modified (phosphothreonine). Positions 268–277 (SHLESSSRPH) are enriched in basic and acidic residues.

It belongs to the uridine kinase family.

The catalysed reaction is uridine + ATP = UMP + ADP + H(+). It carries out the reaction cytidine + ATP = CMP + ADP + H(+). The protein operates within pyrimidine metabolism; CTP biosynthesis via salvage pathway; CTP from cytidine: step 1/3. It functions in the pathway pyrimidine metabolism; UMP biosynthesis via salvage pathway; UMP from uridine: step 1/1. Phosphorylates uridine and cytidine to uridine monophosphate and cytidine monophosphate. Does not phosphorylate deoxyribonucleosides or purine ribonucleosides. Can use ATP or GTP as a phosphate donor. This chain is Uridine-cytidine kinase 1 (Uck1), found in Mus musculus (Mouse).